Reading from the N-terminus, the 265-residue chain is Tryptophan synthase alpha chain (265 aa).

Active-site proton acceptor residues include glutamate 50 and aspartate 61.

This sequence belongs to the TrpA family. Tetramer of two alpha and two beta chains.

It carries out the reaction (1S,2R)-1-C-(indol-3-yl)glycerol 3-phosphate + L-serine = D-glyceraldehyde 3-phosphate + L-tryptophan + H2O. It functions in the pathway amino-acid biosynthesis; L-tryptophan biosynthesis; L-tryptophan from chorismate: step 5/5. Its function is as follows. The alpha subunit is responsible for the aldol cleavage of indoleglycerol phosphate to indole and glyceraldehyde 3-phosphate. The polypeptide is Tryptophan synthase alpha chain (Trichodesmium erythraeum (strain IMS101)).